A 117-amino-acid chain; its full sequence is Large ribosomal subunit protein uL18 (117 aa).

Belongs to the universal ribosomal protein uL18 family. Part of the 50S ribosomal subunit; part of the 5S rRNA/L5/L18/L25 subcomplex. Contacts the 5S and 23S rRNAs.

Functionally, this is one of the proteins that bind and probably mediate the attachment of the 5S RNA into the large ribosomal subunit, where it forms part of the central protuberance. In Chromobacterium violaceum (strain ATCC 12472 / DSM 30191 / JCM 1249 / CCUG 213 / NBRC 12614 / NCIMB 9131 / NCTC 9757 / MK), this protein is Large ribosomal subunit protein uL18.